Reading from the N-terminus, the 21-residue chain is Thioredoxin (21 aa).

N6-acetyllysine is present on Lys3. At Lys8 the chain carries N6-succinyllysine.

This sequence belongs to the thioredoxin family. In terms of assembly, homodimer; disulfide-linked. Interacts with TXNIP through the redox-active site. Interacts with MAP3K5 and CASP3. Interacts with APEX1; the interaction stimulates the FOS/JUN AP-1 DNA-binding activity in a redox-dependent manner.

The protein resides in the nucleus. It is found in the cytoplasm. The protein localises to the secreted. In terms of biological role, participates in various redox reactions through the reversible oxidation of its active center dithiol to a disulfide and catalyzes dithiol-disulfide exchange reactions. Plays a role in the reversible S-nitrosylation of cysteine residues in target proteins, and thereby contributes to the response to intracellular nitric oxide. Nitrosylates the active site Cys of CASP3 in response to nitric oxide (NO), and thereby inhibits caspase-3 activity. Induces the FOS/JUN AP-1 DNA binding activity in ionizing radiation (IR) cells through its oxidation/reduction status and stimulates AP-1 transcriptional activity. The chain is Thioredoxin (TXN) from Canis lupus familiaris (Dog).